The chain runs to 132 residues: Large ribosomal subunit protein uL14 (132 aa).

Belongs to the universal ribosomal protein uL14 family. Part of the 50S ribosomal subunit. Forms a cluster with proteins L3 and L24e, part of which may contact the 16S rRNA in 2 intersubunit bridges.

Functionally, binds to 23S rRNA. Forms part of two intersubunit bridges in the 70S ribosome. The polypeptide is Large ribosomal subunit protein uL14 (Thermoplasma volcanium (strain ATCC 51530 / DSM 4299 / JCM 9571 / NBRC 15438 / GSS1)).